Consider the following 374-residue polypeptide: Tuliposide A-converting enzyme b1, amyloplastic (374 aa).

Residues 1–68 (MSVALFCGPP…TNSSLSPSPT (68 aa)) constitute an amyloplast transit peptide. The active-site Acyl-ester intermediate is S226. Active-site charge relay system residues include D316 and H348.

It belongs to the AB hydrolase superfamily. In terms of assembly, homodimer. Highly expressed in pistil and bulb scales. Lower expression in stem, and barely detected in root, leaf, petal and stamen.

It localises to the plastid. The protein resides in the amyloplast. It catalyses the reaction 6-tuliposide A = tulipalin A + D-glucose. Functionally, lactone-forming carboxylesterases, specifically catalyzing intramolecular transesterification, but not hydrolysis. Involved in the biosynthesis of tulipalins, defensive chemicals that show antimicrobial activities against a broad range of strains of bacteria and fungi. Substrates are 6-tuliposide A &gt; 6-tuliposide B. The chain is Tuliposide A-converting enzyme b1, amyloplastic (TCEA-B1) from Tulipa gesneriana (Garden tulip).